A 106-amino-acid polypeptide reads, in one-letter code: UPF0449 protein C19orf25 homolog (106 aa).

Belongs to the UPF0449 family.

The polypeptide is UPF0449 protein C19orf25 homolog (Xenopus tropicalis (Western clawed frog)).